We begin with the raw amino-acid sequence, 139 residues long: Acidic phospholipase A2 Tgc-E6 (139 aa).

The N-terminal stretch at 1–16 is a signal peptide; sequence MRTLWIMAVLLLGVEG. 7 disulfide bridges follow: C42–C132, C44–C60, C59–C111, C65–C139, C66–C104, C73–C97, and C91–C102. Ca(2+) contacts are provided by Y43, G45, and G47. H63 is an active-site residue. A Ca(2+)-binding site is contributed by D64. The active site involves D105.

The protein belongs to the phospholipase A2 family. Group II subfamily. D49 sub-subfamily. Monomer. The cofactor is Ca(2+). Expressed by the venom gland.

Its subcellular location is the secreted. It carries out the reaction a 1,2-diacyl-sn-glycero-3-phosphocholine + H2O = a 1-acyl-sn-glycero-3-phosphocholine + a fatty acid + H(+). Its function is as follows. Snake venom phospholipase A2 (PLA2) that inhibits the ADP-(IC(50)=272 nM) and collagen-induced (IC(50)=518 nM) human platelet aggregation in platelet rich plasma. Exhibits very high hydrolytic activities toward the synthetic lecithin, and prefers the anionic micelles (dPPC with deoxycholate) to the zwitterionic micelles (dPPC with Triton X-100). PLA2 catalyzes the calcium-dependent hydrolysis of the 2-acyl groups in 3-sn-phosphoglycerides. The polypeptide is Acidic phospholipase A2 Tgc-E6 (Trimeresurus gracilis (Kikuchi habu)).